A 492-amino-acid polypeptide reads, in one-letter code: T-box transcription factor TBX5-A (492 aa).

Residues 1-43 are disordered; the sequence is MADSEDTFRLQNSPSDSEPKDLQNEGKSDKQNAAVSKSPSSQT. The segment covering 17–30 has biased composition (basic and acidic residues); it reads SEPKDLQNEGKSDK. Polar residues predominate over residues 31 to 43; that stretch reads QNAAVSKSPSSQT. A DNA-binding region (T-box) is located at residues 62 to 237; sequence LWTKFHEVGT…NNPFAKGFRG (176 aa). The interval 331 to 352 is disordered; sequence AGEHPYKKPYVESSSSEDDHYY.

In terms of assembly, monomer. Homodimer (via the T-box); binds DNA as homodimer. As to expression, expressed in the dorsal optic cup of developing eye, pectoral fin buds and heart. At 31 hpf, when the pectoral fin buds have begun bulging outwards, restricted expression is detected throughout the mesenchyme of the early fin buds and these high levels of expression continue until later stages.

The protein resides in the nucleus. It localises to the cytoplasm. Required for pectoral fin formation. Together with tbx5b, involved in eye and heart development. Required for the looping stage of heart development. May bind to the core DNA motif of promoters. The protein is T-box transcription factor TBX5-A (tbx5a) of Danio rerio (Zebrafish).